Reading from the N-terminus, the 76-residue chain is MSPFSLLILVICAFSLFFLINLSRGLSILLVFTKNQLLALLLLSIVSLFSISLISALIFFDLLPSTFFGFILLLFF.

A signal peptide spans methionine 1–glycine 25. At leucine 26–lysine 34 the chain is on the extracellular side. A helical membrane pass occupies residues asparagine 35–serine 55. Topologically, residues alanine 56–phenylalanine 76 are cytoplasmic.

It is found in the membrane. The sequence is that of KANTR integral membrane protein from Mus musculus (Mouse).